A 264-amino-acid polypeptide reads, in one-letter code: uncharacterized protein (264 aa).

An NADP(+)-binding site is contributed by 13 to 20 (TGSTSGIG). Ser-141 contributes to the substrate binding site. Tyr-154 (proton acceptor) is an active-site residue.

It belongs to the short-chain dehydrogenases/reductases (SDR) family.

This is an uncharacterized protein from Bacillus subtilis (strain 168).